The following is a 321-amino-acid chain: MQWLELSVTVDTEAVESVSELFAQYGYNGGVAVEEAIIPSLDSPEYQIDTNKPVIVRTYLLANEQAADAQTQIERGLWVLGMMRPVGDLQVKTIAEEDWANAWKEHYRTRRIGQRFVIVPSWLEYEPAENDVVLNLDPGMAFGTGLHPTTQLCLELMELIEFNNTTVLDLGCGSGILAVGAAKLGSQRVLALDTDPIAVEATAENARINHAETLVTALEGSLGDAPLEHWLGWEGAQLGTPQSYRHHNEFDVILANILAKVHVVLGNDYLAALKPGGVLITSGIINEREADVVAAFDAVGLEQVERRTQGDWVAFTHRKPV.

Residues Thr150, Gly171, Asp193, and Asn256 each coordinate S-adenosyl-L-methionine.

It belongs to the methyltransferase superfamily. PrmA family.

Its subcellular location is the cytoplasm. It catalyses the reaction L-lysyl-[protein] + 3 S-adenosyl-L-methionine = N(6),N(6),N(6)-trimethyl-L-lysyl-[protein] + 3 S-adenosyl-L-homocysteine + 3 H(+). Methylates ribosomal protein L11. The polypeptide is Ribosomal protein L11 methyltransferase (Herpetosiphon aurantiacus (strain ATCC 23779 / DSM 785 / 114-95)).